The primary structure comprises 576 residues: MDAFATSPTSALIKAVNCIAHVTPMAGEDSSENRRASNYKPSTWDYEFLQSLATSHNTVQEKHMKMAEKLKEEVKSMIKGQMEPVAKLELINIVQRLGLKYRFESEIKEELFSLYKDGTDAWWVDNLHATALRFRLLRENGIFVPQDVFETFKDKSGKFKSQLCKDVRGLLSLYEASYLGWEGEDLLDEAKKFSTTNLNNVKESISSNTLGRLVKHALNLPLHWSAARYEARWFIDEYEKEENVNPNLLKYAKLDFNIVQSIHQGELGNLARWWVETGLDKLSFVRNTLMQNFMWGCAMVFEPQYGKVRDAAVKQASLIAMVDDVYDVYGSLEELEIFTDIVDRWDITGIDKLPRNISMILLTMFNTANQIGYDLLRDRGFNGIPHIAQAWATLCKKYLKEAKWYHSGYKPTLEEYLENGLVSISFVLSLVTAYLQTETLENLTYESAAYVNSVPPLVRYSGLLNRLYNDLGTSSAEIARGDTLKSIQCYMTQTGATEEAAREHIKGLVHEAWKGMNKCLFEQTPFAEPFVGFNVNTVRGSQFFYQHGDGYAVTESWTKDLSLSVLIHPIPLNEED.

Residues Arg286, Asp323, Asp327, Arg466, and Asn469 each coordinate (2E,6E)-farnesyl diphosphate. Residues Asp323 and Asp327 each contribute to the Mg(2+) site. Positions 323–327 match the DDXXD motif motif; sequence DDVYD. 3 residues coordinate Mg(2+): Asn469, Thr473, and Glu477.

The protein belongs to the terpene synthase family. Tpsb subfamily. It depends on Mg(2+) as a cofactor. Mn(2+) serves as cofactor.

Its function is as follows. Produces almost exclusively beta-bisabolene and only traces of alpha-bisabolol from (2E,6E)-farnesyl diphosphate in fragrance biosynthesis. The chain is Beta-bisabolene synthase from Santalum austrocaledonicum (Sandalwood).